We begin with the raw amino-acid sequence, 295 residues long: Bifunctional protein FolD (295 aa).

Residues 166 to 168 (GRS), serine 195, and isoleucine 236 each bind NADP(+).

The protein belongs to the tetrahydrofolate dehydrogenase/cyclohydrolase family. As to quaternary structure, homodimer.

It carries out the reaction (6R)-5,10-methylene-5,6,7,8-tetrahydrofolate + NADP(+) = (6R)-5,10-methenyltetrahydrofolate + NADPH. It catalyses the reaction (6R)-5,10-methenyltetrahydrofolate + H2O = (6R)-10-formyltetrahydrofolate + H(+). The protein operates within one-carbon metabolism; tetrahydrofolate interconversion. In terms of biological role, catalyzes the oxidation of 5,10-methylenetetrahydrofolate to 5,10-methenyltetrahydrofolate and then the hydrolysis of 5,10-methenyltetrahydrofolate to 10-formyltetrahydrofolate. The polypeptide is Bifunctional protein FolD (Prosthecochloris aestuarii (strain DSM 271 / SK 413)).